A 92-amino-acid chain; its full sequence is RNA-binding protein Hfq (92 aa).

A Sm domain is found at 9-68; the sequence is DPFLNALRRERVPVSIYLVNGIKLQGQVESFDQFVILLKNTVSQMVYKHAISTVVPSRPF. A compositionally biased stretch (polar residues) spans 73–82; it reads HQATNAQAGY. The interval 73-92 is disordered; sequence HQATNAQAGYNAQHDDGDEK.

The protein belongs to the Hfq family. As to quaternary structure, homohexamer.

Its function is as follows. RNA chaperone that binds small regulatory RNA (sRNAs) and mRNAs to facilitate mRNA translational regulation in response to envelope stress, environmental stress and changes in metabolite concentrations. Also binds with high specificity to tRNAs. The sequence is that of RNA-binding protein Hfq from Shewanella pealeana (strain ATCC 700345 / ANG-SQ1).